Reading from the N-terminus, the 272-residue chain is Large ribosomal subunit protein uL2cz/uL2cy (272 aa).

Disordered regions lie at residues 1–33 and 220–272; these read MAIH…SGQR and VMNP…RRSK. Ala-2 is subject to N-methylalanine. Positions 7–30 are enriched in polar residues; sequence KTSTSSTRNGAVQVKSNPRNNLIS.

It belongs to the universal ribosomal protein uL2 family. Component of the chloroplast large ribosomal subunit (LSU). Mature 70S chloroplast ribosomes of higher plants consist of a small (30S) and a large (50S) subunit. The 30S small subunit contains 1 molecule of ribosomal RNA (16S rRNA) and 24 different proteins. The 50S large subunit contains 3 rRNA molecules (23S, 5S and 4.5S rRNA) and 33 different proteins.

The protein resides in the plastid. Its subcellular location is the chloroplast. In terms of biological role, component of the chloroplast ribosome (chloro-ribosome), a dedicated translation machinery responsible for the synthesis of chloroplast genome-encoded proteins, including proteins of the transcription and translation machinery and components of the photosynthetic apparatus. The sequence is that of Large ribosomal subunit protein uL2cz/uL2cy (rpl2-A) from Spinacia oleracea (Spinach).